We begin with the raw amino-acid sequence, 457 residues long: MLFWHTQPEHYNQHNSGSYLRDVLALPIFKQEEPQLSPENEARLPPLQYVLCAATSPAVKLHEETLTYLNQGQSYEIRLLENRKLGDFQDLNTKYVKSIIRVVFNDRRLQYTEHQQLEGWRWSRPGDRILDIDIPLSVGILDPRASPTQLNAVEFLWDPAKRASAFIQVHCISTEFTPRKHGGEKGVPFRVQIDTFKQNENGEYTEHLHSASCQIKVFKPKGADRKQETDREKMEKRTAQEKEKYQPSYETTILTECSPWPDVAYQVNSAPSPSYNGSPNSFGLGEGNASPTHPVEALPVGSDHLLPSASIQDAQQWLHRNRFSQFCRLFASFSGADLLKMSRDDLVQICGPADGIRLFNAIKGRNVRPKMTIYVCQELEQNRVPLQQKRDGSGDSNLCVYHAIFLEELTTLDLIEKIANLYSISPQHIHRVYRQGPTGIHVVVSNELRAMTATTSS.

The mediate transcriptional repression stretch occupies residues 1–52; the sequence is MLFWHTQPEHYNQHNSGSYLRDVLALPIFKQEEPQLSPENEARLPPLQYVLC. Residues 43–280 form the Grh/CP2 DB domain; the sequence is RLPPLQYVLC…PSPSYNGSPN (238 aa). Disordered regions lie at residues 219–245 and 271–301; these read KPKGADRKQETDREKMEKRTAQEKEKY and PSPSYNGSPNSFGLGEGNASPTHPVEALPVG. The segment covering 221-245 has biased composition (basic and acidic residues); that stretch reads KGADRKQETDREKMEKRTAQEKEKY. The SAM2-like domain stretch occupies residues 261–365; it reads PDVAYQVNSA…IRLFNAIKGR (105 aa). Over residues 271 to 281 the composition is skewed to polar residues; that stretch reads PSPSYNGSPNS.

Belongs to the grh/CP2 family. CP2 subfamily. In terms of assembly, forms homohexamers via its SAM-like domain. Interacts with MTA1; which is indispensable for TFCP2L1-mediated self-renewal-promoting effect and endoderm-inhibiting action.

The protein resides in the nucleus. Functionally, transcription factor that facilitates establishment and maintenance of pluripotency in embryonic stem cells (ESCs). With KLF2, acts as the major effector of self-renewal that mediates induction of pluripotency downstream of LIF/STAT3 and Wnt/beta-catenin signaling. Required for normal duct development in the salivary gland and kidney. Coordinates the development of the kidney collecting ducts intercalated (IC) and principal (PC) cells, which regulate acid-base and salt-water homeostasis, respectively. Regulates the expression of IC genes including subunits B1 and D2 of the V-ATPase complex, OXGR1, CA12, SLC4A1, AQP6 and IC-specific transcription factor FOXI1. Also regulates the expression of JAG1 and subsequent notch signaling in the collecting duct. JAG1 initiates notch signaling in PCs but inhibits notch signaling in ICs. Acts as a transcriptional suppressor that may suppress UBP1-mediated transcriptional activation. Modulates the placental expression of CYP11A1. In Pongo abelii (Sumatran orangutan), this protein is Transcription factor CP2-like protein 1 (TFCP2L1).